We begin with the raw amino-acid sequence, 485 residues long: Ribosomal protein S6 kinase beta-2 (485 aa).

Residues 1 to 26 (MAAVFDLDLETEEGSEGEGEPEFSPA) form a disordered region. Over residues 7–21 (LDLETEEGSEGEGEP) the composition is skewed to acidic residues. At S15 the chain carries Phosphoserine. One can recognise a Protein kinase domain in the interval 67 to 328 (FELLSVLGKG…AADVQRHPFF (262 aa)). Residues 73–81 (LGKGGYGKV) and K99 each bind ATP. D194 functions as the Proton acceptor in the catalytic mechanism. One can recognise an AGC-kinase C-terminal domain in the interval 329–399 (RHINWDDLLA…VAPSVLDSIK (71 aa)). A disordered region spans residues 407 to 485 (KLRSPRRLNS…SKKGRGRSGR (79 aa)). The residue at position 417 (S417) is a Phosphoserine. T420 is subject to Phosphothreonine. Phosphoserine is present on S423. A compositionally biased stretch (pro residues) spans 436-469 (SPGPPEPMEPSLPPLLPSPPSPPPTSTAPLPIRP). Positions 474-480 (KKSKKGR) match the Nuclear localization signal motif. The segment covering 474 to 485 (KKSKKGRGRSGR) has biased composition (basic residues). At S476 the chain carries Phosphoserine; by PKC.

It belongs to the protein kinase superfamily. AGC Ser/Thr protein kinase family. S6 kinase subfamily. Phosphorylated and activated by MTOR. Phosphorylation by PKC within the NLS in response to mitogenic stimuli causes cytoplasmic retention.

It is found in the cytoplasm. The protein localises to the nucleus. The catalysed reaction is L-seryl-[protein] + ATP = O-phospho-L-seryl-[protein] + ADP + H(+). It catalyses the reaction L-threonyl-[protein] + ATP = O-phospho-L-threonyl-[protein] + ADP + H(+). Functionally, phosphorylates specifically ribosomal protein S6. Seems to act downstream of mTOR signaling in response to growth factors and nutrients to promote cell proliferation, cell growth and cell cycle progression in an alternative pathway regulated by MEAK7. The chain is Ribosomal protein S6 kinase beta-2 (Rps6kb2) from Mus musculus (Mouse).